Consider the following 448-residue polypeptide: tRNA(Ile)-lysidine synthase (448 aa).

25–30 (SGGSDS) serves as a coordination point for ATP.

Belongs to the tRNA(Ile)-lysidine synthase family.

The protein localises to the cytoplasm. It catalyses the reaction cytidine(34) in tRNA(Ile2) + L-lysine + ATP = lysidine(34) in tRNA(Ile2) + AMP + diphosphate + H(+). Ligates lysine onto the cytidine present at position 34 of the AUA codon-specific tRNA(Ile) that contains the anticodon CAU, in an ATP-dependent manner. Cytidine is converted to lysidine, thus changing the amino acid specificity of the tRNA from methionine to isoleucine. This is tRNA(Ile)-lysidine synthase from Brucella melitensis biotype 2 (strain ATCC 23457).